Consider the following 343-residue polypeptide: Putative outer membrane protein y4fJ (343 aa).

The first 17 residues, 1–17, serve as a signal peptide directing secretion; that stretch reads MRMNFSTVLLGSSVALA.

It belongs to the alphaproteobacteria porin family.

It is found in the cell outer membrane. May act as an outer membrane pore. The polypeptide is Putative outer membrane protein y4fJ (Sinorhizobium fredii (strain NBRC 101917 / NGR234)).